A 353-amino-acid chain; its full sequence is Membrane lipoprotein TmpC (353 aa).

The signal sequence occupies residues 1–20; that stretch reads MREKWVRAFAGVFCAMLLIG. A lipid anchor (N-palmitoyl cysteine) is attached at C21. C21 carries the S-diacylglycerol cysteine lipid modification. Position 47 (D47) interacts with guanosine. D47 provides a ligand contact to inosine. Residues 47–48 and F56 contribute to the adenosine site; that span reads DS. Positions 57, 128, 206, 232, 258, and 280 each coordinate guanosine. Inosine is bound by residues N57 and D128. Adenosine-binding residues include D128, F206, G232, D258, and K280. Inosine-binding residues include G232, D258, and K280.

The protein belongs to the BMP lipoprotein family. As to quaternary structure, monomer.

Its subcellular location is the cell membrane. Its function is as follows. Binds purine nucleosides and may play a role in purine nucleoside uptake. May be part of an ABC-type nucleoside uptake system. Has highest affinity for guanosine, followed by inosine and adenosine. Has very low affinity for cytidine and does not bind thymidine. The chain is Membrane lipoprotein TmpC (tmpC) from Treponema pallidum (strain Nichols).